A 687-amino-acid polypeptide reads, in one-letter code: Solute carrier organic anion transporter family member 1B2 (687 aa).

Residues 1–28 are Cytoplasmic-facing; the sequence is MDHTQQSRKAAEAQPSRSKQTRFCDGFK. The chain crosses the membrane as a helical span at residues 29–48; sequence LFLAALSFSYICKALGGVVM. The Extracellular segment spans residues 49–67; sequence KSSITQIERRFDIPSSISG. The chain crosses the membrane as a helical span at residues 68-88; it reads LIDGGFEIGNLLVIVFVSYFG. Over 89 to 94 the chain is Cytoplasmic; the sequence is SKLHRP. Residues 95 to 119 form a helical membrane-spanning segment; that stretch reads KLIGIGCFIMGIGSILTALPHFFMG. The Extracellular portion of the chain corresponds to 120–165; that stretch reads YYKYAKENDIGSLGNSTLTCFINQMTSPTGPSPEIVEKGCEKGLKS. An N-linked (GlcNAc...) asparagine glycan is attached at Asn134. The chain crosses the membrane as a helical span at residues 166–194; sequence HMWIYVLMGNMLRGIGETPIVPLGISYLD. Residues 195 to 213 are Cytoplasmic-facing; it reads DFAKEGHTSMHLGTLHTIA. A helical transmembrane segment spans residues 214–234; it reads MIGPILGFIMSSVFAKIYVDV. Residues 235-252 are Extracellular-facing; that stretch reads GYVDLNSVRITPNDARWV. Residues 253-277 form a helical membrane-spanning segment; sequence GAWWLSFIVNGLLCITSSIPFFFLP. Residues 278–328 lie on the Cytoplasmic side of the membrane; it reads KIPKRSQEERKNSVSLHAPKTDEEKKHMTNLTKQEEQDPSNMTGFLRSLRS. A disordered region spans residues 286–311; the sequence is ERKNSVSLHAPKTDEEKKHMTNLTKQ. Phosphoserine is present on residues Ser290 and Ser292. The chain crosses the membrane as a helical span at residues 329–350; that stretch reads ILTNEIYVIFLILTLLQVSGFI. Residues 351–370 lie on the Extracellular side of the membrane; sequence GSFTYLFKFIEQQFGRTASQ. The helical transmembrane segment at 371–394 threads the bilayer; that stretch reads ANFLLGIITIPTMATAMFLGGYIV. Residues 395–398 are Cytoplasmic-facing; that stretch reads KKFK. Residues 399-422 form a helical membrane-spanning segment; the sequence is LTSVGIAKFVFFTSSVAYAFQFLY. Topologically, residues 423 to 531 are extracellular; sequence FPLLCENKPF…YKCKTNYYFY (109 aa). The 58-residue stretch at 450-507 folds into the Kazal-like domain; it reads DVPLSYCNSDCSCDKNQWEPICGENGVTYISPCLAGCKSFRGDKKPNNTEFYDCSCIS. 3 cysteine pairs are disulfide-bonded: Cys456/Cys486, Cys462/Cys482, and Cys471/Cys505. Residues Asn496 and Asn511 are each glycosylated (N-linked (GlcNAc...) asparagine). A helical membrane pass occupies residues 532–554; that stretch reads IILQVTVSFFTAMGSPSLILILM. Topologically, residues 555–563 are cytoplasmic; it reads KSVQPELKS. A helical membrane pass occupies residues 564 to 589; it reads LAMGFHSLIIRALGGILAPIYYGAFI. Residues 590–623 are Extracellular-facing; it reads DRTCIKWSVTSCGKRGACRLYNSRLFGFSYLGLN. The helical transmembrane segment at 624-641 threads the bilayer; sequence LALKTPPLFLYVVLIYFT. The Cytoplasmic portion of the chain corresponds to 642–687; the sequence is KRKYKRNDNKTLENGRQFTDEGNPDSVNKNGYYCVPYDEQSNETPL. Thr660 carries the post-translational modification Phosphothreonine. Ser667 bears the Phosphoserine mark.

The protein belongs to the organo anion transporter (TC 2.A.60) family. Liver specific. Expression is highest in central perivenous hepatocytes and lowest in the periportal region. Isoform 1 predominates. Not detected in heart, brain, kidney, skeletal muscle, lung, testis or spleen.

The protein localises to the basolateral cell membrane. It catalyses the reaction estrone 3-sulfate(out) = estrone 3-sulfate(in). The catalysed reaction is taurocholate(out) = taurocholate(in). It carries out the reaction prostaglandin E2(out) = prostaglandin E2(in). The enzyme catalyses L-thyroxine(out) = L-thyroxine(in). Its function is as follows. Mediates the Na(+)-independent uptake of organic anions such as taurochlate, bromosulfophthalein and steroid conjugates (estrone 3-sulfate, 17-beta-glucuronosyl estradiol, dehydroepiandrosterone sulfate). Also transports prostaglandin E2 and L-thyroxine (T4). Shows a pH-sensitive substrate specificity which may be ascribed to the protonation state of the binding site and leads to a stimulation of substrate transport in an acidic microenvironment. Hydrogencarbonate/HCO3(-) acts as the probable counteranion that exchanges for organic anions. In Rattus norvegicus (Rat), this protein is Solute carrier organic anion transporter family member 1B2 (Slco1b2).